Reading from the N-terminus, the 288-residue chain is Phosphatidylserine decarboxylase proenzyme (288 aa).

Active-site charge relay system; for autoendoproteolytic cleavage activity residues include Asp90, His147, and Ser252. The active-site Schiff-base intermediate with substrate; via pyruvic acid; for decarboxylase activity is the Ser252. Ser252 is subject to Pyruvic acid (Ser); by autocatalysis.

It belongs to the phosphatidylserine decarboxylase family. PSD-B subfamily. Prokaryotic type I sub-subfamily. Heterodimer of a large membrane-associated beta subunit and a small pyruvoyl-containing alpha subunit. It depends on pyruvate as a cofactor. In terms of processing, is synthesized initially as an inactive proenzyme. Formation of the active enzyme involves a self-maturation process in which the active site pyruvoyl group is generated from an internal serine residue via an autocatalytic post-translational modification. Two non-identical subunits are generated from the proenzyme in this reaction, and the pyruvate is formed at the N-terminus of the alpha chain, which is derived from the carboxyl end of the proenzyme. The autoendoproteolytic cleavage occurs by a canonical serine protease mechanism, in which the side chain hydroxyl group of the serine supplies its oxygen atom to form the C-terminus of the beta chain, while the remainder of the serine residue undergoes an oxidative deamination to produce ammonia and the pyruvoyl prosthetic group on the alpha chain. During this reaction, the Ser that is part of the protease active site of the proenzyme becomes the pyruvoyl prosthetic group, which constitutes an essential element of the active site of the mature decarboxylase.

The protein localises to the cell membrane. It catalyses the reaction a 1,2-diacyl-sn-glycero-3-phospho-L-serine + H(+) = a 1,2-diacyl-sn-glycero-3-phosphoethanolamine + CO2. It functions in the pathway phospholipid metabolism; phosphatidylethanolamine biosynthesis; phosphatidylethanolamine from CDP-diacylglycerol: step 2/2. Catalyzes the formation of phosphatidylethanolamine (PtdEtn) from phosphatidylserine (PtdSer). In Pseudomonas fluorescens (strain ATCC BAA-477 / NRRL B-23932 / Pf-5), this protein is Phosphatidylserine decarboxylase proenzyme.